A 349-amino-acid chain; its full sequence is tRNA N6-adenosine threonylcarbamoyltransferase (349 aa).

Fe cation contacts are provided by His-117 and His-121. Substrate contacts are provided by residues 139–143 (QVSGG), Asp-172, Gly-185, Asp-189, and Asn-278. Residue Asp-310 coordinates Fe cation.

It belongs to the KAE1 / TsaD family. It depends on Fe(2+) as a cofactor.

It is found in the cytoplasm. The catalysed reaction is L-threonylcarbamoyladenylate + adenosine(37) in tRNA = N(6)-L-threonylcarbamoyladenosine(37) in tRNA + AMP + H(+). In terms of biological role, required for the formation of a threonylcarbamoyl group on adenosine at position 37 (t(6)A37) in tRNAs that read codons beginning with adenine. Is involved in the transfer of the threonylcarbamoyl moiety of threonylcarbamoyl-AMP (TC-AMP) to the N6 group of A37, together with TsaE and TsaB. TsaD likely plays a direct catalytic role in this reaction. The chain is tRNA N6-adenosine threonylcarbamoyltransferase from Lactobacillus acidophilus (strain ATCC 700396 / NCK56 / N2 / NCFM).